The sequence spans 456 residues: Enolase (456 aa).

Gln-164 is a binding site for (2R)-2-phosphoglycerate. Glu-207 acts as the Proton donor in catalysis. 3 residues coordinate Mg(2+): Asp-244, Glu-287, and Asp-314. (2R)-2-phosphoglycerate-binding residues include Lys-339, Arg-368, Ser-369, and Lys-390. Lys-339 acts as the Proton acceptor in catalysis.

It belongs to the enolase family. As to quaternary structure, component of the RNA degradosome, a multiprotein complex involved in RNA processing and mRNA degradation. The cofactor is Mg(2+).

It is found in the cytoplasm. The protein localises to the secreted. Its subcellular location is the cell surface. The catalysed reaction is (2R)-2-phosphoglycerate = phosphoenolpyruvate + H2O. It functions in the pathway carbohydrate degradation; glycolysis; pyruvate from D-glyceraldehyde 3-phosphate: step 4/5. Its function is as follows. Catalyzes the reversible conversion of 2-phosphoglycerate (2-PG) into phosphoenolpyruvate (PEP). It is essential for the degradation of carbohydrates via glycolysis. The protein is Enolase of Francisella tularensis subsp. holarctica (strain OSU18).